A 759-amino-acid chain; its full sequence is Subtilisin-like protease SBT3.10 (759 aa).

The N-terminal stretch at 1–25 (MSKTIILLAFFLSIVLNVQISFVVA) is a signal peptide. The propeptide at 26–108 (ESKVYVVYLG…VIPNTLYEMT (83 aa)) is activation peptide. An Inhibitor I9 domain is found at 29–106 (VYVVYLGEKE…VQVIPNTLYE (78 aa)). Residues 112 to 606 (TWDYLGVSPG…GGLINPEKAV (495 aa)) form the Peptidase S8 domain. Residue Asp142 is the Charge relay system of the active site. N-linked (GlcNAc...) asparagine glycans are attached at residues Asn175 and Asn202. His218 (charge relay system) is an active-site residue. 2 N-linked (GlcNAc...) asparagine glycosylation sites follow: Asn233 and Asn361. Residues 390 to 464 (DCEKLSANPK…ELGTDILFYI (75 aa)) enclose the PA domain. Ser537 functions as the Charge relay system in the catalytic mechanism.

It belongs to the peptidase S8 family.

It is found in the secreted. This Arabidopsis thaliana (Mouse-ear cress) protein is Subtilisin-like protease SBT3.10.